Reading from the N-terminus, the 133-residue chain is MTLNLCVLTPNRIVWDSEVKEIILSTNSGQIGVLPNHAPIATAVDIGILRIRLNDQWLTMALMGGFARIGNNEITILVNDAEKGSDIDPQEAQQALEIAEANLRKAEGKRQTIEANLALRRARTRVEAINAIS.

Belongs to the ATPase epsilon chain family. F-type ATPases have 2 components, CF(1) - the catalytic core - and CF(0) - the membrane proton channel. CF(1) has five subunits: alpha(3), beta(3), gamma(1), delta(1), epsilon(1). CF(0) has three main subunits: a, b and c.

It is found in the plastid. It localises to the chloroplast thylakoid membrane. In terms of biological role, produces ATP from ADP in the presence of a proton gradient across the membrane. In Gossypium barbadense (Sea Island cotton), this protein is ATP synthase epsilon chain, chloroplastic.